The primary structure comprises 239 residues: Lipoprotein-releasing system ATP-binding protein LolD (239 aa).

The ABC transporter domain maps to 9 to 239; the sequence is LQVQHVSKHY…AATSPTGLAE (231 aa). ATP is bound at residue 45–52; it reads GSSGSGKS.

The protein belongs to the ABC transporter superfamily. Lipoprotein translocase (TC 3.A.1.125) family. In terms of assembly, the complex is composed of two ATP-binding proteins (LolD) and two transmembrane proteins (LolC and LolE).

Its subcellular location is the cell inner membrane. In terms of biological role, part of the ABC transporter complex LolCDE involved in the translocation of mature outer membrane-directed lipoproteins, from the inner membrane to the periplasmic chaperone, LolA. Responsible for the formation of the LolA-lipoprotein complex in an ATP-dependent manner. In Shewanella frigidimarina (strain NCIMB 400), this protein is Lipoprotein-releasing system ATP-binding protein LolD.